Consider the following 184-residue polypeptide: Endoribonuclease YbeY (184 aa).

3 residues coordinate Zn(2+): His146, His150, and His156.

Belongs to the endoribonuclease YbeY family. Zn(2+) is required as a cofactor.

The protein localises to the cytoplasm. Single strand-specific metallo-endoribonuclease involved in late-stage 70S ribosome quality control and in maturation of the 3' terminus of the 16S rRNA. This is Endoribonuclease YbeY from Nostoc sp. (strain PCC 7120 / SAG 25.82 / UTEX 2576).